The sequence spans 340 residues: Alcohol dehydrogenase (340 aa).

Zn(2+)-binding residues include cysteine 40 and histidine 63.

The protein belongs to the zinc-containing alcohol dehydrogenase family. The cofactor is Zn(2+).

The catalysed reaction is a primary alcohol + NAD(+) = an aldehyde + NADH + H(+). It carries out the reaction a secondary alcohol + NAD(+) = a ketone + NADH + H(+). The sequence is that of Alcohol dehydrogenase (adhA) from Rhizobium meliloti (strain 1021) (Ensifer meliloti).